The following is a 226-amino-acid chain: B-cell antigen receptor complex-associated protein alpha chain (226 aa).

Residues Met1 to Ala32 form the signal peptide. Residues Leu33 to Gln116 form the Ig-like C2-type domain. Topologically, residues Leu33 to Arg143 are extracellular. A disulfide bridge links Cys54 with Cys106. N-linked (GlcNAc...) asparagine glycosylation is found at Asn57, Asn63, Asn73, Asn88, Asn97, and Asn112. A helical transmembrane segment spans residues Ile144–Phe165. At Arg166–Pro226 the chain is on the cytoplasmic side. One can recognise an ITAM domain in the interval Asp177–Gly205. 2 positions are modified to phosphotyrosine; by SRC-type Tyr-kinases: Tyr188 and Tyr199. Arg204 is modified (asymmetric dimethylarginine; by PRMT1). Tyr210 is subject to Phosphotyrosine; by Tyr-kinases.

In terms of assembly, heterodimer of alpha and beta chains; disulfide-linked. Part of the B-cell antigen receptor complex where the alpha/beta chain heterodimer is non-covalently associated with an antigen-specific membrane-bound surface immunoglobulin of two heavy chains and two light chains. Interacts through its phosphorylated ITAM domain with the SH2 domains of SYK which stimulates SYK autophosphorylation and activation. Also interacts, when phosphorylated on Tyr-210, with the SH2 domain of BLNK/SLP65, bringing BLNK into proximity with SYK and allowing SYK to phosphorylate BLNK which is necessary for trafficking of the BCR to late endosomes. Interacts with Src-family tyrosine kinases including FYN and LYN, increasing their activity. Post-translationally, phosphorylated on tyrosine, serine and threonine residues upon B-cell activation. Phosphorylation of tyrosine residues by Src-family kinases is an early and essential feature of the BCR signaling cascade. The phosphorylated tyrosines serve as docking sites for SH2-domain containing kinases, leading to their activation which in turn leads to phosphorylation of downstream targets. Phosphorylated by LYN. Phosphorylation of serine and threonine residues may prevent subsequent tyrosine phosphorylation. Arginine methylation in the ITAM domain may interfere with the binding of SYK. It promotes signals leading to B-cell differentiation. In terms of tissue distribution, B-cells.

It is found in the cell membrane. Its function is as follows. Required in cooperation with CD79B for initiation of the signal transduction cascade activated by binding of antigen to the B-cell antigen receptor complex (BCR) which leads to internalization of the complex, trafficking to late endosomes and antigen presentation. Also required for BCR surface expression and for efficient differentiation of pro- and pre-B-cells. Stimulates SYK autophosphorylation and activation. Binds to BLNK, bringing BLNK into proximity with SYK and allowing SYK to phosphorylate BLNK. Also interacts with and increases activity of some Src-family tyrosine kinases. Represses BCR signaling during development of immature B-cells. The chain is B-cell antigen receptor complex-associated protein alpha chain (CD79A) from Homo sapiens (Human).